Here is a 33-residue protein sequence, read N- to C-terminus: Brevinin-2Ef (33 aa).

Cysteine 27 and cysteine 33 are oxidised to a cystine.

Expressed by the skin glands.

The protein resides in the secreted. In terms of biological role, shows antibacterial activity against representative Gram-negative and Gram-positive bacterial species, and hemolytic activity. The polypeptide is Brevinin-2Ef (Pelophylax ridibundus (Marsh frog)).